Here is a 582-residue protein sequence, read N- to C-terminus: DnaJ protein ERDJ3A (582 aa).

Residues 1–25 form the signal peptide; sequence MGIPVRSLLVASIVLSSIALHVAAA. The J domain occupies 29 to 93; the sequence is DPYKVLGVDK…EKRKNYDLYG (65 aa). Asparagine 61 carries an N-linked (GlcNAc...) asparagine glycan. The disordered stretch occupies residues 178–201; it reads GGSQHTGSAGKARRGTKSSGHDSS. Positions 407–437 form a coiled coil; the sequence is VKDLRSGIKELKNLLENFEKKNKKLASNQAK.

In terms of assembly, interacts with BIP5.

Its subcellular location is the endoplasmic reticulum. It localises to the vacuole. Its function is as follows. May play a role in protein folding in the endoplasmic reticulum. The protein is DnaJ protein ERDJ3A of Oryza sativa subsp. japonica (Rice).